The sequence spans 173 residues: Disulfide bond formation protein B (173 aa).

At 1–11 (MNALQWSFRAQ) the chain is on the cytoplasmic side. The chain crosses the membrane as a helical span at residues 12–28 (CLTGFLFCTGLLAYAIF). At 29–46 (LQLHQGLEPCPLCIFQRI) the chain is on the periplasmic side. The cysteines at positions 38 and 41 are disulfide-linked. A helical membrane pass occupies residues 47 to 63 (AFAVLGILFLIAGLYNS). Residues 64 to 70 (SNVYTRK) are Cytoplasmic-facing. The chain crosses the membrane as a helical span at residues 71 to 88 (AYGLLIFLTAIIGTGIAG). Residues 89-145 (RHVWVQLMPHNTISSCGSPLSFLSETMGPFEVFRTVLTGTSNCGNIDWRFLGLSMPM) are Periplasmic-facing. The cysteines at positions 104 and 131 are disulfide-linked. The helical transmembrane segment at 146–164 (WSMFWFVALALLGLLVGFK) threads the bilayer. The Cytoplasmic segment spans residues 165–173 (AERRKPLFS).

It belongs to the DsbB family.

It is found in the cell inner membrane. Functionally, required for disulfide bond formation in some periplasmic proteins. Acts by oxidizing the DsbA protein. This chain is Disulfide bond formation protein B, found in Xylella fastidiosa (strain Temecula1 / ATCC 700964).